The following is a 437-amino-acid chain: Adenylosuccinate synthetase (437 aa).

GTP-binding positions include 12–18 (GDEGKGK) and 40–42 (GHT). D13 (proton acceptor) is an active-site residue. Residues D13 and G40 each coordinate Mg(2+). IMP is bound by residues 13-16 (DEGK), 38-41 (NAGH), T128, R142, Q223, T238, and R302. H41 serves as the catalytic Proton donor. The disordered stretch occupies residues 119–138 (QRGERRIGTTGRGIGPTYAD). Residue 298 to 304 (TTTGRRR) participates in substrate binding. Residues R304, 330 to 332 (KLD), and 412 to 414 (SLG) contribute to the GTP site.

It belongs to the adenylosuccinate synthetase family. In terms of assembly, homodimer. Mg(2+) is required as a cofactor.

The protein localises to the cytoplasm. The enzyme catalyses IMP + L-aspartate + GTP = N(6)-(1,2-dicarboxyethyl)-AMP + GDP + phosphate + 2 H(+). The protein operates within purine metabolism; AMP biosynthesis via de novo pathway; AMP from IMP: step 1/2. Its function is as follows. Plays an important role in the de novo pathway of purine nucleotide biosynthesis. Catalyzes the first committed step in the biosynthesis of AMP from IMP. This Synechococcus sp. (strain WH7803) protein is Adenylosuccinate synthetase.